We begin with the raw amino-acid sequence, 213 residues long: MEAIWLYQFRLIVIGDSTVGKSCLIRRFTEGRFAQVSDPTVGVDFFSRLVEIEPGKRIKLQIWDTAGQERFRSITRAYYRNSVGGLLLFDITNRRSFQNVHEWLEETKVHVQPYQIVFVLVGHKCDLDTQRQVTRHEAEKLAAAYGMKYIETSARDAINVEKAFTDLTRDIYELVKRGEITIQEGWEGVKSGFVPNVVHSSEEVIKSERRCLC.

7 residues coordinate GTP: Ser17, Gly20, Lys21, Ser22, Cys23, Ser37, and Thr40. Ser22 contacts Mg(2+). The interval 35-43 is switch-I; it reads QVSDPTVGV. Mg(2+) is bound by residues Thr40 and Asp64. Gly67, His123, Lys124, Asp126, Ala154, and Arg155 together coordinate GTP. The segment at 67 to 83 is switch-II; the sequence is GQERFRSITRAYYRNSV. Position 201 is a phosphoserine (Ser201). S-geranylgeranyl cysteine attachment occurs at residues Cys211 and Cys213. Cys213 is subject to Cysteine methyl ester.

The protein belongs to the small GTPase superfamily. Rab family. In terms of assembly, interacts (GDP-bound) with C9orf72; C9orf72 in complex with SMCR8 acts as a GEF for RAB39B. Interacts (in GTP-bound form) with PICK1 (via PDZ domain); a PICK1 homodimer may allow simultaneous association of RAB39B and GRIA2 to PICK1 which is involved in GRIA2 trafficking. Interacts with isoform c of RASSF1; the interaction is strong. Interacts with isoform a of RASSF1; the interaction is weak. Interacts with the DLG4/PSD-95. Interacts (GTP-bound) with HOPS complex components VPS39 and VPS41. The cofactor is Mg(2+). In terms of tissue distribution, specifically expressed in neuron and neuronal precursors in the brain. Expression is high in all regions of the brain with highest levels observed in the hippocampus.

Its subcellular location is the cell membrane. It localises to the cytoplasmic vesicle membrane. It is found in the golgi apparatus. The protein resides in the cytoplasmic vesicle. The protein localises to the autophagosome membrane. Its subcellular location is the autolysosome membrane. It catalyses the reaction GTP + H2O = GDP + phosphate + H(+). Regulated by guanine nucleotide exchange factors (GEFs) including C9orf72-SMCR8 complex, which promote the exchange of bound GDP for free GTP. Regulated by GTPase activating proteins (GAPs) which increase the GTP hydrolysis activity. Inhibited by GDP dissociation inhibitors (GDIs). Functionally, the small GTPases Rab are key regulators of intracellular membrane trafficking, from the formation of transport vesicles to their fusion with membranes. Rabs cycle between an inactive GDP-bound form and an active GTP-bound form that is able to recruit to membranes different sets of downstream effectors directly responsible for vesicle formation, movement, tethering and fusion. RAB39B is involved in autophagy and may function in autophagosome formation. Binds downstream effector PICK1 to ensure selectively GRIA2 exit from the endoplasmic reticulum to the Golgi and to regulate AMPAR composition at the post-synapses and thus synaptic transmission. May regulate the homeostasis of SNCA/alpha-synuclein. The chain is Ras-related protein Rab-39B from Mus musculus (Mouse).